The following is a 427-amino-acid chain: Septin-8-A (427 aa).

Residues 39-305 form the Septin-type G domain; the sequence is QGFCFNILCV…ELYRRCKLEE (267 aa). The interval 49–56 is G1 motif; the sequence is GETGIGKS. Residues 49 to 56, G104, 185 to 193, G239, and R254 each bind GTP; these read GETGIGKS and KADTISKSE. A G3 motif region spans residues 101–104; the sequence is DTVG. Residues 184-187 form a G4 motif region; that stretch reads AKAD. Positions 320-409 form a coiled coil; that stretch reads LQETYEAKRK…KAAMEALQSQ (90 aa). Over residues 376-389 the composition is skewed to basic and acidic residues; the sequence is QEESKKVEDKRRDL. Residues 376-427 are disordered; it reads QEESKKVEDKRRDLEEEMNSFNRRKAAMEALQSQSFQATSQQPLKKDKDRKN. Residues 406 to 418 are compositionally biased toward polar residues; that stretch reads LQSQSFQATSQQP.

This sequence belongs to the TRAFAC class TrmE-Era-EngA-EngB-Septin-like GTPase superfamily. Septin GTPase family.

The sequence is that of Septin-8-A (sept8-a) from Xenopus laevis (African clawed frog).